A 285-amino-acid polypeptide reads, in one-letter code: MKLCGFDIGLNQPFFLIAGPCVVESEQLQMDTAGTLKEITSSLGIPFIFKSSYDKANRSSGTSFRGPGMVKGLEILAKVKRELNLPLLTDVHSEADIATVASVVDVLQTPAFLCRQTDFIHAVAQSGKPVNIKKGQFLAPGDMKNVIDKARAAAREKGLNEDNFMACERGASFGYNNLVSDMRSLAIMRETNAPVVFDATHSVQLPGGQGTSSGGQREMVPVLARAAVAVGVAGLFMETHPDPAKALSDGPNAVPLKHMKALLETLLELDRVTKKNGYLENSFGA.

Belongs to the KdsA family.

Its subcellular location is the cytoplasm. It carries out the reaction D-arabinose 5-phosphate + phosphoenolpyruvate + H2O = 3-deoxy-alpha-D-manno-2-octulosonate-8-phosphate + phosphate. Its pathway is carbohydrate biosynthesis; 3-deoxy-D-manno-octulosonate biosynthesis; 3-deoxy-D-manno-octulosonate from D-ribulose 5-phosphate: step 2/3. The protein operates within bacterial outer membrane biogenesis; lipopolysaccharide biosynthesis. This Polaromonas sp. (strain JS666 / ATCC BAA-500) protein is 2-dehydro-3-deoxyphosphooctonate aldolase.